The sequence spans 144 residues: MKAVLTRVSSASVTVGDEVVGSIDCPETGGLLALVGVGAADEPDAWETMVRKIAELRILDNEKSVSDVGAPVLLVSQFTLMGKTARGRRPSWSDAAAGGIAEPVMRRIATGLRERGIHVEEGRFGAMMKVASVNEGPFTVLVEC.

Residues Gly136–Pro137 carry the Gly-cisPro motif, important for rejection of L-amino acids motif.

The protein belongs to the DTD family. As to quaternary structure, homodimer.

It localises to the cytoplasm. The enzyme catalyses glycyl-tRNA(Ala) + H2O = tRNA(Ala) + glycine + H(+). It carries out the reaction a D-aminoacyl-tRNA + H2O = a tRNA + a D-alpha-amino acid + H(+). In terms of biological role, an aminoacyl-tRNA editing enzyme that deacylates mischarged D-aminoacyl-tRNAs. Also deacylates mischarged glycyl-tRNA(Ala), protecting cells against glycine mischarging by AlaRS. Acts via tRNA-based rather than protein-based catalysis; rejects L-amino acids rather than detecting D-amino acids in the active site. By recycling D-aminoacyl-tRNA to D-amino acids and free tRNA molecules, this enzyme counteracts the toxicity associated with the formation of D-aminoacyl-tRNA entities in vivo and helps enforce protein L-homochirality. This is D-aminoacyl-tRNA deacylase from Corynebacterium efficiens (strain DSM 44549 / YS-314 / AJ 12310 / JCM 11189 / NBRC 100395).